A 295-amino-acid chain; its full sequence is (R)-phenoxypropionate/alpha-ketoglutarate-dioxygenase (295 aa).

Positions 111 and 113 each coordinate Fe cation. T138 and W255 together coordinate 2-oxoglutarate. Residue H270 coordinates Fe cation. R281 contributes to the 2-oxoglutarate binding site.

The protein belongs to the TfdA dioxygenase family. Homotrimer. It depends on Fe cation as a cofactor. L-ascorbate is required as a cofactor.

The enzyme catalyses (R)-2-(4-chloro-2-methylphenoxy)propanoate + 2-oxoglutarate + O2 = 2-methyl-4-chlorophenol + pyruvate + succinate + CO2. It carries out the reaction (R)-(2,4-dichlorophenoxy)propanoate + 2-oxoglutarate + O2 = 2,4-dichlorophenol + pyruvate + succinate + CO2. It participates in xenobiotic degradation; 2-(2,4-dichlorophenoxy)propanoate degradation. With respect to regulation, inhibited by divalent cations, most significantly by copper and nickel, and by diethylpyrocarbonate (DEPC). In terms of biological role, involved in the degradation of the phenoxypropionate herbicides. Catalyzes the enantiospecific cleavage of the ether bond in the herbicid R-dichlorprop ((R)-2-(2,4-dichlorophenoxy)propionate)(R-2,4-DP) and R-mecoprop ((R)-2-(4-chloro-2-methylphenoxy)propionate)(R-2,4-MCPP). It can also accept (RS)-2-(2,4,5-trichlorophenoxy)propionate, (RS)-2-(4-chlorophenoxy)propionate, (RS)-2-(m-chlorophenoxy)propionate, however it can only accept 2-oxoglutarate as oxygen acceptor. In Delftia acidovorans (Pseudomonas acidovorans), this protein is (R)-phenoxypropionate/alpha-ketoglutarate-dioxygenase.